A 233-amino-acid chain; its full sequence is MSAAGRRGLIVAIDGPSGAGKSTITKLLADRLGYIHIDTGAMFRTVALAASRAGIAPDNDASLAGLCADLEIAFVRNNGCCRVTANGEDVTDAIRTPAISALTSAISARKVVRDVLLRLQRHMAREGGVILEGRDIGTVVFPDADVKFFLSASVEERGRRRYLELKAKGQEVSLDETIAAVARRDEQDSGREHAPLRRADDAVDIDSTGLSIEEVLDRMESIVRERERATPGA.

An ATP-binding site is contributed by 15 to 23; sequence GPSGAGKST. Residues 183 to 201 are compositionally biased toward basic and acidic residues; the sequence is RRDEQDSGREHAPLRRADD. The interval 183–202 is disordered; sequence RRDEQDSGREHAPLRRADDA.

Belongs to the cytidylate kinase family. Type 1 subfamily.

It is found in the cytoplasm. It catalyses the reaction CMP + ATP = CDP + ADP. It carries out the reaction dCMP + ATP = dCDP + ADP. The sequence is that of Cytidylate kinase from Geobacter sulfurreducens (strain ATCC 51573 / DSM 12127 / PCA).